A 123-amino-acid polypeptide reads, in one-letter code: Protein Wnt-7 (123 aa).

Ser-1 carries O-palmitoleoyl serine; by PORCN lipidation. A disulfide bond links Cys-89 and Cys-104. A glycan (N-linked (GlcNAc...) asparagine) is linked at Asn-90.

Belongs to the Wnt family. Post-translationally, palmitoleoylation is required for efficient binding to frizzled receptors. Depalmitoleoylation leads to Wnt signaling pathway inhibition.

The protein resides in the secreted. The protein localises to the extracellular space. Its subcellular location is the extracellular matrix. Ligand for members of the frizzled family of seven transmembrane receptors. Probable developmental protein. May be a signaling molecule which affects the development of discrete regions of tissues. Is likely to signal over only few cell diameters. This Evasterias troschelii (Mottled sea star) protein is Protein Wnt-7 (WNT-7).